Consider the following 428-residue polypeptide: Serine--tRNA ligase (428 aa).

Position 235–237 (235–237 (TAE)) interacts with L-serine. Position 266 to 268 (266 to 268 (RSE)) interacts with ATP. E289 is an L-serine binding site. 353–356 (EISS) serves as a coordination point for ATP. S389 lines the L-serine pocket.

The protein belongs to the class-II aminoacyl-tRNA synthetase family. Type-1 seryl-tRNA synthetase subfamily. In terms of assembly, homodimer. The tRNA molecule binds across the dimer.

The protein resides in the cytoplasm. It catalyses the reaction tRNA(Ser) + L-serine + ATP = L-seryl-tRNA(Ser) + AMP + diphosphate + H(+). The enzyme catalyses tRNA(Sec) + L-serine + ATP = L-seryl-tRNA(Sec) + AMP + diphosphate + H(+). Its pathway is aminoacyl-tRNA biosynthesis; selenocysteinyl-tRNA(Sec) biosynthesis; L-seryl-tRNA(Sec) from L-serine and tRNA(Sec): step 1/1. In terms of biological role, catalyzes the attachment of serine to tRNA(Ser). Is also able to aminoacylate tRNA(Sec) with serine, to form the misacylated tRNA L-seryl-tRNA(Sec), which will be further converted into selenocysteinyl-tRNA(Sec). The sequence is that of Serine--tRNA ligase from Shewanella baltica (strain OS185).